The primary structure comprises 394 residues: ATP phosphoribosyltransferase regulatory subunit (394 aa).

The protein belongs to the class-II aminoacyl-tRNA synthetase family. HisZ subfamily. Heteromultimer composed of HisG and HisZ subunits.

Its subcellular location is the cytoplasm. It functions in the pathway amino-acid biosynthesis; L-histidine biosynthesis; L-histidine from 5-phospho-alpha-D-ribose 1-diphosphate: step 1/9. In terms of biological role, required for the first step of histidine biosynthesis. May allow the feedback regulation of ATP phosphoribosyltransferase activity by histidine. The sequence is that of ATP phosphoribosyltransferase regulatory subunit from Pseudomonas aeruginosa (strain LESB58).